Consider the following 51-residue polypeptide: Insulin (51 aa).

3 disulfide bridges follow: C7–C37, C19–C50, and C36–C41.

Belongs to the insulin family. As to quaternary structure, heterodimer of a B chain and an A chain linked by two disulfide bonds.

The protein localises to the secreted. Its function is as follows. Insulin decreases blood glucose concentration. It increases cell permeability to monosaccharides, amino acids and fatty acids. It accelerates glycolysis, the pentose phosphate cycle, and glycogen synthesis in liver. This is Insulin (INS) from Elephas maximus (Indian elephant).